A 71-amino-acid polypeptide reads, in one-letter code: Translation initiation factor IF-1 (71 aa).

Positions 1–71 (MAKQAAIEQD…LTKARITYRY (71 aa)) constitute an S1-like domain.

This sequence belongs to the IF-1 family. As to quaternary structure, component of the 30S ribosomal translation pre-initiation complex which assembles on the 30S ribosome in the order IF-2 and IF-3, IF-1 and N-formylmethionyl-tRNA(fMet); mRNA recruitment can occur at any time during PIC assembly.

The protein resides in the cytoplasm. Its function is as follows. One of the essential components for the initiation of protein synthesis. Stabilizes the binding of IF-2 and IF-3 on the 30S subunit to which N-formylmethionyl-tRNA(fMet) subsequently binds. Helps modulate mRNA selection, yielding the 30S pre-initiation complex (PIC). Upon addition of the 50S ribosomal subunit IF-1, IF-2 and IF-3 are released leaving the mature 70S translation initiation complex. This Christiangramia forsetii (strain DSM 17595 / CGMCC 1.15422 / KT0803) (Gramella forsetii) protein is Translation initiation factor IF-1.